The following is a 76-amino-acid chain: Omega-agatoxin-Aa3a (76 aa).

Disulfide bonds link C2-C19, C9-C25, C16-C52, C18-C40, C27-C38, and C59-C67.

Belongs to the neurotoxin 04 (omega-agtx) family. 03 (type II/III omega-agtx) subfamily. In terms of tissue distribution, expressed by the venom gland.

It localises to the secreted. Functionally, omega-agatoxin are antagonist of voltage-gated calcium channels. They block insect neuromuscular transmission presynaptically. Potent blocker of N- (Cav2.2/CACNA1B) and L-type (Cav1/CACNA1) calcium channels. The sequence is that of Omega-agatoxin-Aa3a from Agelenopsis aperta (North American funnel-web spider).